The primary structure comprises 238 residues: Probable transcriptional regulatory protein YeeN (238 aa).

The protein belongs to the TACO1 family. YeeN subfamily.

It is found in the cytoplasm. In Salmonella typhimurium (strain LT2 / SGSC1412 / ATCC 700720), this protein is Probable transcriptional regulatory protein YeeN.